Reading from the N-terminus, the 357-residue chain is D-alanine--D-alanine ligase (357 aa).

An ATP-grasp domain is found at 134-339; the sequence is KQLFEHRGLP…YPDLIAKLID (206 aa). 167 to 222 contacts ATP; sequence NDKLTYPVFVKPANLGSSVGISKCNNEEELKSGITEAFQFDRKLVIEQGINAREIE. Mg(2+)-binding residues include Asp-293, Glu-306, and Asn-308.

The protein belongs to the D-alanine--D-alanine ligase family. The cofactor is Mg(2+). Requires Mn(2+) as cofactor.

The protein localises to the cytoplasm. It carries out the reaction 2 D-alanine + ATP = D-alanyl-D-alanine + ADP + phosphate + H(+). The protein operates within cell wall biogenesis; peptidoglycan biosynthesis. Cell wall formation. This chain is D-alanine--D-alanine ligase, found in Staphylococcus epidermidis (strain ATCC 12228 / FDA PCI 1200).